Here is a 132-residue protein sequence, read N- to C-terminus: ATP synthase epsilon chain (132 aa).

The protein belongs to the ATPase epsilon chain family. As to quaternary structure, F-type ATPases have 2 components, CF(1) - the catalytic core - and CF(0) - the membrane proton channel. CF(1) has five subunits: alpha(3), beta(3), gamma(1), delta(1), epsilon(1). CF(0) has three main subunits: a, b and c.

The protein resides in the cell membrane. Functionally, produces ATP from ADP in the presence of a proton gradient across the membrane. The sequence is that of ATP synthase epsilon chain from Desulforamulus reducens (strain ATCC BAA-1160 / DSM 100696 / MI-1) (Desulfotomaculum reducens).